The primary structure comprises 181 residues: UPF0397 protein str0306 (181 aa).

The next 5 helical transmembrane spans lie at 11-31 (ATGI…IPIF), 45-65 (LFSV…GHAL), 72-92 (GNIS…IGLF), 109-129 (IWFN…VTPI), and 147-167 (FVAG…LLAI).

This sequence belongs to the UPF0397 family.

The protein resides in the cell membrane. This is UPF0397 protein str0306 from Streptococcus thermophilus (strain CNRZ 1066).